Reading from the N-terminus, the 458-residue chain is Phosphomethylpyrimidine synthase (458 aa).

Residues asparagine 80, methionine 109, tyrosine 139, histidine 175, serine 195–glycine 197, aspartate 236–arginine 239, and glutamate 275 contribute to the substrate site. Histidine 279 is a Zn(2+) binding site. Tyrosine 302 provides a ligand contact to substrate. Histidine 343 contributes to the Zn(2+) binding site. [4Fe-4S] cluster-binding residues include cysteine 423, cysteine 426, and cysteine 431.

This sequence belongs to the ThiC family. [4Fe-4S] cluster is required as a cofactor.

It carries out the reaction 5-amino-1-(5-phospho-beta-D-ribosyl)imidazole + S-adenosyl-L-methionine = 4-amino-2-methyl-5-(phosphooxymethyl)pyrimidine + CO + 5'-deoxyadenosine + formate + L-methionine + 3 H(+). Its pathway is cofactor biosynthesis; thiamine diphosphate biosynthesis. Catalyzes the synthesis of the hydroxymethylpyrimidine phosphate (HMP-P) moiety of thiamine from aminoimidazole ribotide (AIR) in a radical S-adenosyl-L-methionine (SAM)-dependent reaction. The protein is Phosphomethylpyrimidine synthase of Cyanothece sp. (strain PCC 7425 / ATCC 29141).